Here is a 514-residue protein sequence, read N- to C-terminus: 2,3-bisphosphoglycerate-independent phosphoglycerate mutase (514 aa).

Aspartate 14 and serine 64 together coordinate Mn(2+). Serine 64 (phosphoserine intermediate) is an active-site residue. Substrate-binding positions include histidine 125, 155–156 (RD), arginine 187, arginine 193, 263–266 (RADR), and lysine 336. 5 residues coordinate Mn(2+): aspartate 403, histidine 407, aspartate 444, histidine 445, and histidine 463.

This sequence belongs to the BPG-independent phosphoglycerate mutase family. As to quaternary structure, monomer. Mn(2+) serves as cofactor.

It catalyses the reaction (2R)-2-phosphoglycerate = (2R)-3-phosphoglycerate. It functions in the pathway carbohydrate degradation; glycolysis; pyruvate from D-glyceraldehyde 3-phosphate: step 3/5. Functionally, catalyzes the interconversion of 2-phosphoglycerate and 3-phosphoglycerate. This is 2,3-bisphosphoglycerate-independent phosphoglycerate mutase from Shewanella putrefaciens (strain CN-32 / ATCC BAA-453).